Here is a 236-residue protein sequence, read N- to C-terminus: Small ribosomal subunit protein uS2c (236 aa).

Component of the chloroplast small ribosomal subunit (SSU). Mature 70S chloroplast ribosomes of higher plants consist of a small (30S) and a large (50S) subunit. The 30S small subunit contains 1 molecule of ribosomal RNA (16S rRNA) and 24 different proteins. The 50S large subunit contains 3 rRNA molecules (23S, 5S and 4.5S rRNA) and 33 different proteins.

Its subcellular location is the plastid. It localises to the chloroplast. Its function is as follows. Component of the chloroplast ribosome (chloro-ribosome), a dedicated translation machinery responsible for the synthesis of chloroplast genome-encoded proteins, including proteins of the transcription and translation machinery and components of the photosynthetic apparatus. The sequence is that of Small ribosomal subunit protein uS2c (rps2) from Spinacia oleracea (Spinach).